The sequence spans 601 residues: Invasin CotH3 (601 aa).

Positions 1 to 17 (MKLSIISAAFLVAITHA) are cleaved as a signal peptide. Residues N28, N85, N170, N324, N449, N527, N541, N554, N561, and N571 are each glycosylated (N-linked (GlcNAc...) asparagine). Residues 539-579 (SANGTTAAAPAPAAGNSTGKGGNQSISSSASSNKTSAQSTS) are compositionally biased toward low complexity. The tract at residues 539–581 (SANGTTAAAPAPAAGNSTGKGGNQSISSSASSNKTSAQSTSGA) is disordered. The GPI-anchor amidated serine moiety is linked to residue S579. Residues 580–601 (GASRSKTAPIVLAISALALLVF) constitute a propeptide, removed in mature form.

Interacts with HSPA5/BiP on the cell surface of host nasal epithelial cells.

It localises to the cell membrane. In terms of biological role, promotes invasion of host epithelial cells by adhering to receptors on the host cell surface to facilitate endocytosis of the pathogen into host cells. Binds HSPA5/BiP protein on the cell surface of host nasal epithelial cells. The protein is Invasin CotH3 of Rhizopus delemar (strain RA 99-880 / ATCC MYA-4621 / FGSC 9543 / NRRL 43880) (Mucormycosis agent).